A 96-amino-acid chain; its full sequence is MELLDVIKRPVITEKSMLAMDEKKYTFEVDTRANKTLVKQAVESAFDVKVANVNILNVRPKFKRMGKYAGYTKKRRKAIVTLTEDSKEIQLFEAAE.

This sequence belongs to the universal ribosomal protein uL23 family. In terms of assembly, part of the 50S ribosomal subunit. Contacts protein L29, and trigger factor when it is bound to the ribosome.

Functionally, one of the early assembly proteins it binds 23S rRNA. One of the proteins that surrounds the polypeptide exit tunnel on the outside of the ribosome. Forms the main docking site for trigger factor binding to the ribosome. This chain is Large ribosomal subunit protein uL23, found in Enterococcus faecalis (strain ATCC 700802 / V583).